A 270-amino-acid polypeptide reads, in one-letter code: Urease accessory protein UreD (270 aa).

Belongs to the UreD family. UreD, UreF and UreG form a complex that acts as a GTP-hydrolysis-dependent molecular chaperone, activating the urease apoprotein by helping to assemble the nickel containing metallocenter of UreC. The UreE protein probably delivers the nickel.

Its subcellular location is the cytoplasm. Functionally, required for maturation of urease via the functional incorporation of the urease nickel metallocenter. This chain is Urease accessory protein UreD, found in Actinobacillus pleuropneumoniae serotype 5b (strain L20).